The primary structure comprises 671 residues: Acetyl-coenzyme A synthetase 2 (671 aa).

Residues 207–210 (RGGR) and threonine 326 contribute to the CoA site. ATP-binding positions include 402-404 (GEP), 426-431 (DTYWQT), aspartate 517, and arginine 532. Position 540 (serine 540) interacts with CoA. Arginine 543 provides a ligand contact to ATP. Residue arginine 603 coordinates CoA.

This sequence belongs to the ATP-dependent AMP-binding enzyme family.

The catalysed reaction is acetate + ATP + CoA = acetyl-CoA + AMP + diphosphate. This chain is Acetyl-coenzyme A synthetase 2 (ACS2), found in Candida albicans (strain SC5314 / ATCC MYA-2876) (Yeast).